Consider the following 164-residue polypeptide: Transcription elongation factor GreA (164 aa).

It belongs to the GreA/GreB family.

Functionally, necessary for efficient RNA polymerase transcription elongation past template-encoded arresting sites. The arresting sites in DNA have the property of trapping a certain fraction of elongating RNA polymerases that pass through, resulting in locked ternary complexes. Cleavage of the nascent transcript by cleavage factors such as GreA or GreB allows the resumption of elongation from the new 3'terminus. GreA releases sequences of 2 to 3 nucleotides. The protein is Transcription elongation factor GreA of Helicobacter pylori (strain P12).